Here is a 222-residue protein sequence, read N- to C-terminus: Pyridoxine/pyridoxamine 5'-phosphate oxidase (222 aa).

FMN contacts are provided by residues 69–74 (RMVLLK), 84–85 (YT), K91, and Q113. K74 contributes to the substrate binding site. 3 residues coordinate substrate: Y131, R135, and S139. Residues 148 to 149 (QS) and W193 contribute to the FMN site. Residue 199 to 201 (RLH) participates in substrate binding. An FMN-binding site is contributed by R203.

It belongs to the pyridoxamine 5'-phosphate oxidase family. Homodimer. FMN is required as a cofactor.

The enzyme catalyses pyridoxamine 5'-phosphate + O2 + H2O = pyridoxal 5'-phosphate + H2O2 + NH4(+). The catalysed reaction is pyridoxine 5'-phosphate + O2 = pyridoxal 5'-phosphate + H2O2. Its pathway is cofactor metabolism; pyridoxal 5'-phosphate salvage; pyridoxal 5'-phosphate from pyridoxamine 5'-phosphate: step 1/1. The protein operates within cofactor metabolism; pyridoxal 5'-phosphate salvage; pyridoxal 5'-phosphate from pyridoxine 5'-phosphate: step 1/1. In terms of biological role, catalyzes the oxidation of either pyridoxine 5'-phosphate (PNP) or pyridoxamine 5'-phosphate (PMP) into pyridoxal 5'-phosphate (PLP). This chain is Pyridoxine/pyridoxamine 5'-phosphate oxidase, found in Maricaulis maris (strain MCS10) (Caulobacter maris).